Consider the following 268-residue polypeptide: Phosphate import ATP-binding protein PstB 2 (268 aa).

An ABC transporter domain is found at 22 to 263 (MALTGVNFYY…PKVKRTEDYI (242 aa)). ATP is bound at residue 54-61 (GPSGCGKS).

Belongs to the ABC transporter superfamily. Phosphate importer (TC 3.A.1.7) family. As to quaternary structure, the complex is composed of two ATP-binding proteins (PstB), two transmembrane proteins (PstC and PstA) and a solute-binding protein (PstS).

Its subcellular location is the cell inner membrane. It carries out the reaction phosphate(out) + ATP + H2O = ADP + 2 phosphate(in) + H(+). In terms of biological role, part of the ABC transporter complex PstSACB involved in phosphate import. Responsible for energy coupling to the transport system. This Rhizobium johnstonii (strain DSM 114642 / LMG 32736 / 3841) (Rhizobium leguminosarum bv. viciae) protein is Phosphate import ATP-binding protein PstB 2.